A 275-amino-acid polypeptide reads, in one-letter code: 4-hydroxy-tetrahydrodipicolinate reductase (275 aa).

NAD(+)-binding positions include 13–18 (GAAGKM), 108–110 (GTT), and 134–137 (APNF). His164 acts as the Proton donor/acceptor in catalysis. His165 is a binding site for (S)-2,3,4,5-tetrahydrodipicolinate. The active-site Proton donor is Lys168. 174–175 (GT) contacts (S)-2,3,4,5-tetrahydrodipicolinate.

This sequence belongs to the DapB family.

Its subcellular location is the cytoplasm. It catalyses the reaction (S)-2,3,4,5-tetrahydrodipicolinate + NAD(+) + H2O = (2S,4S)-4-hydroxy-2,3,4,5-tetrahydrodipicolinate + NADH + H(+). The enzyme catalyses (S)-2,3,4,5-tetrahydrodipicolinate + NADP(+) + H2O = (2S,4S)-4-hydroxy-2,3,4,5-tetrahydrodipicolinate + NADPH + H(+). It functions in the pathway amino-acid biosynthesis; L-lysine biosynthesis via DAP pathway; (S)-tetrahydrodipicolinate from L-aspartate: step 4/4. Catalyzes the conversion of 4-hydroxy-tetrahydrodipicolinate (HTPA) to tetrahydrodipicolinate. The sequence is that of 4-hydroxy-tetrahydrodipicolinate reductase from Synechocystis sp. (strain ATCC 27184 / PCC 6803 / Kazusa).